We begin with the raw amino-acid sequence, 194 residues long: Sigma factor AlgU negative regulatory protein (194 aa).

A helical membrane pass occupies residues 89 to 105; it reads LAVAASVTLAVLAGVRL.

The protein belongs to the RseA family.

The protein localises to the cell membrane. Negative regulator of the sigma factor AlgU. Plays a role in the differentiation of P.aeruginosa into the alginate-producing form. Inactivation of mucA causes a switch from the non-mucoid to mucoid state resulting in constitutive expression of alginate biosynthetic genes. This chain is Sigma factor AlgU negative regulatory protein (mucA), found in Pseudomonas aeruginosa (strain ATCC 15692 / DSM 22644 / CIP 104116 / JCM 14847 / LMG 12228 / 1C / PRS 101 / PAO1).